Reading from the N-terminus, the 383-residue chain is 8-amino-7-oxononanoate synthase (383 aa).

Residues arginine 27 and arginine 34 each contribute to the substrate site. Residue 114–115 participates in pyridoxal 5'-phosphate binding; the sequence is GY. A substrate-binding site is contributed by histidine 139. Residues serine 187, 212-215, and 232-235 contribute to the pyridoxal 5'-phosphate site; these read DDAH and TLSK. Residue lysine 235 is modified to N6-(pyridoxal phosphate)lysine. Threonine 344 lines the substrate pocket.

It belongs to the class-II pyridoxal-phosphate-dependent aminotransferase family. BioF subfamily. Homodimer. Pyridoxal 5'-phosphate is required as a cofactor.

It catalyses the reaction 6-carboxyhexanoyl-[ACP] + L-alanine + H(+) = (8S)-8-amino-7-oxononanoate + holo-[ACP] + CO2. It functions in the pathway cofactor biosynthesis; biotin biosynthesis. Functionally, catalyzes the decarboxylative condensation of pimeloyl-[acyl-carrier protein] and L-alanine to produce 8-amino-7-oxononanoate (AON), [acyl-carrier protein], and carbon dioxide. The polypeptide is 8-amino-7-oxononanoate synthase (Methylorubrum extorquens (strain PA1) (Methylobacterium extorquens)).